Reading from the N-terminus, the 1189-residue chain is Pesticidal crystal protein Cry1Ca (1189 aa).

The protein belongs to the delta endotoxin family.

In terms of biological role, promotes colloidosmotic lysis by binding to the midgut epithelial cells of many lepidopteran larvae including Spodoptera species. The polypeptide is Pesticidal crystal protein Cry1Ca (cry1Ca) (Bacillus thuringiensis subsp. aizawai).